Reading from the N-terminus, the 597-residue chain is 2-isopropylmalate synthase (597 aa).

The unknown stretch occupies residues 1-80 (MQLDIDRLVA…QKNESLERTE (80 aa)). Positions 87-349 (VIIFDTTLRD…ETGIDTTQIV (263 aa)) constitute a Pyruvate carboxyltransferase domain. The tract at residues 87–349 (VIIFDTTLRD…ETGIDTTQIV (263 aa)) is 2-isopropylmalate synthase. Mn(2+) contacts are provided by Asp-96, His-284, His-286, and Asn-320. The regulatory domain stretch occupies residues 475-597 (KFISQKISTE…KPKAQGSGTI (123 aa)).

It belongs to the alpha-IPM synthase/homocitrate synthase family. LeuA type 1 subfamily. Homodimer. Requires Mn(2+) as cofactor.

Its subcellular location is the cytoplasm. The enzyme catalyses 3-methyl-2-oxobutanoate + acetyl-CoA + H2O = (2S)-2-isopropylmalate + CoA + H(+). It participates in amino-acid biosynthesis; L-leucine biosynthesis; L-leucine from 3-methyl-2-oxobutanoate: step 1/4. In terms of biological role, catalyzes the condensation of the acetyl group of acetyl-CoA with 3-methyl-2-oxobutanoate (2-ketoisovalerate) to form 3-carboxy-3-hydroxy-4-methylpentanoate (2-isopropylmalate). This is 2-isopropylmalate synthase from Neisseria gonorrhoeae (strain ATCC 700825 / FA 1090).